The following is a 157-amino-acid chain: Lipoprotein signal peptidase (157 aa).

4 helical membrane-spanning segments follow: residues 10–30 (FIFI…KYAI), 36–56 (YESS…FSLL), 58–78 (FLEG…FIFL), and 84–104 (LFKA…SNIL). Residues Asp114 and Asp131 contribute to the active site. Residues 123–143 (DFAIFNFADVMIDVGVGVLLI) form a helical membrane-spanning segment.

The protein belongs to the peptidase A8 family.

It is found in the cell inner membrane. It catalyses the reaction Release of signal peptides from bacterial membrane prolipoproteins. Hydrolyzes -Xaa-Yaa-Zaa-|-(S,diacylglyceryl)Cys-, in which Xaa is hydrophobic (preferably Leu), and Yaa (Ala or Ser) and Zaa (Gly or Ala) have small, neutral side chains.. The protein operates within protein modification; lipoprotein biosynthesis (signal peptide cleavage). This protein specifically catalyzes the removal of signal peptides from prolipoproteins. This chain is Lipoprotein signal peptidase, found in Helicobacter acinonychis (strain Sheeba).